The sequence spans 245 residues: 23S rRNA (guanosine-2'-O-)-methyltransferase RlmB (245 aa).

The S-adenosyl-L-methionine site is built by G197, I217, and L226.

It belongs to the class IV-like SAM-binding methyltransferase superfamily. RNA methyltransferase TrmH family. RlmB subfamily.

The protein resides in the cytoplasm. The enzyme catalyses guanosine(2251) in 23S rRNA + S-adenosyl-L-methionine = 2'-O-methylguanosine(2251) in 23S rRNA + S-adenosyl-L-homocysteine + H(+). Its function is as follows. Specifically methylates the ribose of guanosine 2251 in 23S rRNA. The protein is 23S rRNA (guanosine-2'-O-)-methyltransferase RlmB of Bordetella parapertussis (strain 12822 / ATCC BAA-587 / NCTC 13253).